The sequence spans 178 residues: Caveolin-1 (178 aa).

Position 2 is an N-acetylserine (Ser-2). Ser-2 bears the Phosphoserine mark. Residues 2–94 (SGGKYVDSEG…WKASFTTFTV (93 aa)) are required for homooligomerization. Topologically, residues 2–104 (SGGKYVDSEG…TKYWFYRLLS (103 aa)) are cytoplasmic. Lys-5 is modified (N6-acetyllysine; alternate). Lys-5 participates in a covalent cross-link: Glycyl lysine isopeptide (Lys-Gly) (interchain with G-Cter in ubiquitin); alternate. Tyr-6 is subject to Phosphotyrosine. A Phosphoserine modification is found at Ser-9. Phosphotyrosine; by ABL1 is present on Tyr-14. A Phosphotyrosine modification is found at Tyr-25. Residues Lys-26 and Lys-30 each participate in a glycyl lysine isopeptide (Lys-Gly) (interchain with G-Cter in ubiquitin) cross-link. A Phosphoserine modification is found at Ser-37. Glycyl lysine isopeptide (Lys-Gly) (interchain with G-Cter in ubiquitin) cross-links involve residues Lys-39, Lys-47, and Lys-57. The segment at 82-94 (DGIWKASFTTFTV) is interaction with CAVIN3. Positions 105 to 125 (ALFGIPMALIWGIYFAILSFL) form an intramembrane region, helical. Residues 126-178 (HIWAVVPCIKSFLIEIQCISRVYSIYIHTVCDPLFEAIGKIFSNVRISLQKEI) are Cytoplasmic-facing. The interacts with SPRY1, SPRY2, SPRY3 and SPRY4 stretch occupies residues 131-142 (VPCIKSFLIEIQ). Residues Cys-133, Cys-143, and Cys-156 are each lipidated (S-palmitoyl cysteine). Residues 149 to 160 (SIYIHTVCDPLF) are interacts with SPRY1, SPRY2, and SPRY4. The interval 167-178 (FSNVRISLQKEI) is interacts with SPRY1, SPRY2, SPRY3 and SPRY4.

The protein belongs to the caveolin family. Homooligomer. Interacts with GLIPR2. Interacts with NOSTRIN. Interacts with SNAP25 and STX1A. Interacts (via the N-terminus) with DPP4; the interaction is direct. Interacts with CTNNB1, CDH1 and JUP. Interacts with PACSIN2; this interaction induces membrane tubulation. Interacts with SLC7A9. Interacts with BMX and BTK. Interacts with TGFBR1. Interacts with CAVIN3 (via leucine-zipper domain) in a cholesterol-sensitive manner. Interacts with CAVIN1. Interacts with EHD2 in a cholesterol-dependent manner. Forms a ternary complex with UBXN6 and VCP; mediates CAV1 targeting to lysosomes for degradation. Interacts with ABCG1; this interaction regulates ABCG1-mediated cholesterol efflux. Interacts with NEU3; this interaction enhances NEU3 sialidase activity within caveola. Interacts (via C-terminus) with SPRY1, SPRY2 (via C-terminus), SPRY3, and SPRY4. Interacts with IGFBP5; this interaction allows trafficking of IGFBP5 from the plasma membrane to the nucleus. Phosphorylated at Tyr-14 by ABL1 in response to oxidative stress. Post-translationally, ubiquitinated. Undergo monoubiquitination and multi- and/or polyubiquitination. Monoubiquitination of N-terminal lysines promotes integration in a ternary complex with UBXN6 and VCP which promotes oligomeric CAV1 targeting to lysosomes for degradation. Ubiquitinated by ZNRF1; leading to degradation and modulation of the TLR4-mediated immune response.

Its subcellular location is the golgi apparatus membrane. The protein localises to the cell membrane. It is found in the membrane. The protein resides in the caveola. It localises to the membrane raft. In terms of biological role, may act as a scaffolding protein within caveolar membranes. Forms a stable heterooligomeric complex with CAV2 that targets to lipid rafts and drives caveolae formation. Mediates the recruitment of CAVIN proteins (CAVIN1/2/3/4) to the caveolae. Interacts directly with G-protein alpha subunits and can functionally regulate their activity. Involved in the costimulatory signal essential for T-cell receptor (TCR)-mediated T-cell activation. Its binding to DPP4 induces T-cell proliferation and NF-kappa-B activation in a T-cell receptor/CD3-dependent manner. Recruits CTNNB1 to caveolar membranes and may regulate CTNNB1-mediated signaling through the Wnt pathway. Negatively regulates TGFB1-mediated activation of SMAD2/3 by mediating the internalization of TGFBR1 from membrane rafts leading to its subsequent degradation. Binds 20(S)-hydroxycholesterol (20(S)-OHC). This chain is Caveolin-1 (CAV1), found in Aotus nancymaae (Ma's night monkey).